The chain runs to 441 residues: Tubulin beta-1 chain (441 aa).

Residues glutamine 11, glutamate 69, serine 138, glycine 142, threonine 143, glycine 144, asparagine 204, and asparagine 226 each contribute to the GTP site. Position 69 (glutamate 69) interacts with Mg(2+).

The protein belongs to the tubulin family. In terms of assembly, dimer of alpha and beta chains. A typical microtubule is a hollow water-filled tube with an outer diameter of 25 nm and an inner diameter of 15 nM. Alpha-beta heterodimers associate head-to-tail to form protofilaments running lengthwise along the microtubule wall with the beta-tubulin subunit facing the microtubule plus end conferring a structural polarity. Microtubules usually have 13 protofilaments but different protofilament numbers can be found in some organisms and specialized cells. It depends on Mg(2+) as a cofactor. Expressed primarily in touch receptor neurons.

It is found in the cytoplasm. The protein localises to the cytoskeleton. Its function is as follows. Tubulin is the major constituent of microtubules, a cylinder consisting of laterally associated linear protofilaments composed of alpha- and beta-tubulin heterodimers. Microtubules grow by the addition of GTP-tubulin dimers to the microtubule end, where a stabilizing cap forms. Below the cap, tubulin dimers are in GDP-bound state, owing to GTPase activity of alpha-tubulin. Plays a role in mechanosensory transduction (touch sensitivity). Functionally, mec-7 beta-tubulin is required for the production of 15-protofilament microtubules. This Caenorhabditis briggsae protein is Tubulin beta-1 chain (mec-7).